The primary structure comprises 152 residues: Small ribosomal subunit protein uS19u (152 aa).

It belongs to the universal ribosomal protein uS19 family.

It localises to the cytoplasm. The chain is Small ribosomal subunit protein uS19u (RPS15A) from Arabidopsis thaliana (Mouse-ear cress).